We begin with the raw amino-acid sequence, 560 residues long: Dihydroxy-acid dehydratase (560 aa).

Cys-52 is a [2Fe-2S] cluster binding site. Asp-84 contributes to the Mg(2+) binding site. Cys-125 is a [2Fe-2S] cluster binding site. Positions 126 and 127 each coordinate Mg(2+). The residue at position 127 (Lys-127) is an N6-carboxylysine. Cys-197 is a binding site for [2Fe-2S] cluster. Glu-448 contributes to the Mg(2+) binding site. The active-site Proton acceptor is the Ser-474.

The protein belongs to the IlvD/Edd family. In terms of assembly, homodimer. Requires [2Fe-2S] cluster as cofactor. Mg(2+) is required as a cofactor.

The enzyme catalyses (2R)-2,3-dihydroxy-3-methylbutanoate = 3-methyl-2-oxobutanoate + H2O. It catalyses the reaction (2R,3R)-2,3-dihydroxy-3-methylpentanoate = (S)-3-methyl-2-oxopentanoate + H2O. It functions in the pathway amino-acid biosynthesis; L-isoleucine biosynthesis; L-isoleucine from 2-oxobutanoate: step 3/4. Its pathway is amino-acid biosynthesis; L-valine biosynthesis; L-valine from pyruvate: step 3/4. Functionally, functions in the biosynthesis of branched-chain amino acids. Catalyzes the dehydration of (2R,3R)-2,3-dihydroxy-3-methylpentanoate (2,3-dihydroxy-3-methylvalerate) into 2-oxo-3-methylpentanoate (2-oxo-3-methylvalerate) and of (2R)-2,3-dihydroxy-3-methylbutanoate (2,3-dihydroxyisovalerate) into 2-oxo-3-methylbutanoate (2-oxoisovalerate), the penultimate precursor to L-isoleucine and L-valine, respectively. The polypeptide is Dihydroxy-acid dehydratase (Francisella tularensis subsp. tularensis (strain WY96-3418)).